Consider the following 115-residue polypeptide: Large ribosomal subunit protein bL20 (115 aa).

It belongs to the bacterial ribosomal protein bL20 family.

In terms of biological role, binds directly to 23S ribosomal RNA and is necessary for the in vitro assembly process of the 50S ribosomal subunit. It is not involved in the protein synthesizing functions of that subunit. The polypeptide is Large ribosomal subunit protein bL20 (Prochlorococcus marinus (strain MIT 9303)).